The sequence spans 151 residues: Metallothiol transferase FosB (151 aa).

The region spanning 4-119 is the VOC domain; the sequence is SINHVTYSVS…DGHKFELHTG (116 aa). Mg(2+)-binding residues include His-7, His-66, and Glu-115. The active-site Proton donor/acceptor is the Glu-115.

This sequence belongs to the fosfomycin resistance protein family. FosB subfamily. Homodimer. The cofactor is Mg(2+).

Its subcellular location is the cytoplasm. Metallothiol transferase which confers resistance to fosfomycin by catalyzing the addition of a thiol cofactor to fosfomycin. L-cysteine is probably the physiological thiol donor. This Staphylococcus saprophyticus subsp. saprophyticus (strain ATCC 15305 / DSM 20229 / NCIMB 8711 / NCTC 7292 / S-41) protein is Metallothiol transferase FosB.